The primary structure comprises 437 residues: Elongation factor 1-gamma (437 aa).

Alanine 2 is modified (N-acetylalanine). The GST N-terminal domain maps to 2–87 (AAGTLYTYPE…YVSNEELRGS (86 aa)). Positions 88 to 216 (TPEAAAQVVQ…VKLCEKMAQF (129 aa)) constitute a GST C-terminal domain. Lysine 147 and lysine 212 each carry N6-acetyllysine. The span at 221–254 (FAETQPKKDTPRKEKGSREEKQKPQAERKEEKKA) shows a compositional bias: basic and acidic residues. The interval 221-268 (FAETQPKKDTPRKEKGSREEKQKPQAERKEEKKAAAPAPEEEMDECEQ) is disordered. A Glycyl lysine isopeptide (Lys-Gly) (interchain with G-Cter in SUMO1) cross-link involves residue lysine 253. An EF-1-gamma C-terminal domain is found at 276-437 (AKDPFAHLPK…KAFNQGKIFK (162 aa)). A Glycyl lysine isopeptide (Lys-Gly) (interchain with G-Cter in SUMO2) cross-link involves residue lysine 285. Lysine 401 is modified (N6-acetyllysine). Lysine 434 bears the N6-acetyllysine; alternate mark. Position 434 is an N6-malonyllysine; alternate (lysine 434).

In terms of assembly, EF-1 is composed of four subunits: alpha, beta, delta, and gamma. Highly expressed in pancreatic tumor tissue and to a lesser extent in normal kidney, intestine, pancreas, stomach, lung, brain, spleen and liver.

Its function is as follows. Probably plays a role in anchoring the complex to other cellular components. In Homo sapiens (Human), this protein is Elongation factor 1-gamma (EEF1G).